The primary structure comprises 118 residues: Small ribosomal subunit protein uS13 (118 aa).

The disordered stretch occupies residues 94 to 118 (SLPVRGQRSKTNARTRKGPRKAIKK).

It belongs to the universal ribosomal protein uS13 family. As to quaternary structure, part of the 30S ribosomal subunit. Forms a loose heterodimer with protein S19. Forms two bridges to the 50S subunit in the 70S ribosome.

Functionally, located at the top of the head of the 30S subunit, it contacts several helices of the 16S rRNA. In the 70S ribosome it contacts the 23S rRNA (bridge B1a) and protein L5 of the 50S subunit (bridge B1b), connecting the 2 subunits; these bridges are implicated in subunit movement. Contacts the tRNAs in the A and P-sites. In Psychromonas ingrahamii (strain DSM 17664 / CCUG 51855 / 37), this protein is Small ribosomal subunit protein uS13.